The sequence spans 314 residues: Dihydroorotate dehydrogenase (fumarate) (314 aa).

Substrate-binding positions include Lys-46, 70–74 (NSMGL), and Asn-130. A Glycyl lysine isopeptide (Lys-Gly) (interchain with G-Cter in ubiquitin) cross-link involves residue Lys-46. Residue 46–47 (KS) coordinates FMN. Residue Asn-130 coordinates FMN. The active-site Nucleophile is Cys-133. Residues Lys-167 and Ile-195 each contribute to the FMN site. 196–197 (NS) is a substrate binding site. Residues Gly-224, 252 to 253 (GG), and 274 to 275 (GT) each bind FMN.

It belongs to the dihydroorotate dehydrogenase family. Type 1 subfamily. Homodimer. FMN is required as a cofactor.

Its subcellular location is the cytoplasm. The enzyme catalyses (S)-dihydroorotate + fumarate = orotate + succinate. The protein operates within pyrimidine metabolism; UMP biosynthesis via de novo pathway. Its activity is regulated as follows. The activity is independent of the presence of oxygen. Catalyzes the conversion of dihydroorotate to orotate with fumarate as the electron acceptor. Molecular oxygen can replace fumarate in vitro. Does not use oxaloacetate or NAD or NADP as electron acceptors. The polypeptide is Dihydroorotate dehydrogenase (fumarate) (URA1) (Saccharomyces cerevisiae (strain ATCC 204508 / S288c) (Baker's yeast)).